A 107-amino-acid chain; its full sequence is Chlorobenzene dioxygenase, ferredoxin component (107 aa).

Positions 4-99 constitute a Rieske domain; it reads TYIMRQSDLP…IKVEGGDVHV (96 aa). [2Fe-2S] cluster contacts are provided by Cys43, His45, Cys62, and His65.

Belongs to the bacterial ring-hydroxylating dioxygenase ferredoxin component family. As to quaternary structure, this dioxygenase system consists of four proteins: the two subunits of the oxygenase component (TecA1 and TecA2), a ferredoxin (TecA3) and a ferredoxin reductase (TecA4). [2Fe-2S] cluster serves as cofactor.

The protein operates within aromatic compound metabolism. In terms of biological role, part of the chlorobenzene dioxygenase system that catalyzes the dihydroxylation of a range of aromatic compounds, including chlorinated benzenes and toluenes, and dinuclear aromatics such as biphenyl and dibenzo-p-dioxin. The polypeptide is Chlorobenzene dioxygenase, ferredoxin component (Cupriavidus sp. (strain PS12)).